A 157-amino-acid chain; its full sequence is Dihydrofolate reductase type 15 (157 aa).

Positions 2 to 156 constitute a DHFR domain; sequence KLSLMAAISK…INYSYQIWQK (155 aa).

The protein belongs to the dihydrofolate reductase family. As to quaternary structure, homodimer.

It catalyses the reaction (6S)-5,6,7,8-tetrahydrofolate + NADP(+) = 7,8-dihydrofolate + NADPH + H(+). It functions in the pathway cofactor biosynthesis; tetrahydrofolate biosynthesis; 5,6,7,8-tetrahydrofolate from 7,8-dihydrofolate: step 1/1. In terms of biological role, key enzyme in folate metabolism. Catalyzes an essential reaction for de novo glycine and purine synthesis, and for DNA precursor synthesis. The sequence is that of Dihydrofolate reductase type 15 (dhfrXV) from Escherichia coli.